Reading from the N-terminus, the 51-residue chain is UPF0320 protein YOL166W-A (51 aa).

This sequence belongs to the UPF0320 family.

The sequence is that of UPF0320 protein YOL166W-A from Saccharomyces cerevisiae (strain ATCC 204508 / S288c) (Baker's yeast).